The primary structure comprises 89 residues: Small ribosomal subunit protein uS15 (89 aa).

It belongs to the universal ribosomal protein uS15 family. In terms of assembly, part of the 30S ribosomal subunit. Forms a bridge to the 50S subunit in the 70S ribosome, contacting the 23S rRNA.

One of the primary rRNA binding proteins, it binds directly to 16S rRNA where it helps nucleate assembly of the platform of the 30S subunit by binding and bridging several RNA helices of the 16S rRNA. Its function is as follows. Forms an intersubunit bridge (bridge B4) with the 23S rRNA of the 50S subunit in the ribosome. This is Small ribosomal subunit protein uS15 from Desulfatibacillum aliphaticivorans.